A 1121-amino-acid chain; its full sequence is MSYNNGGGGGGGGYRNDRDDRYHNNDRQNYRSSDQGRSGYNDDRRDNRYDDRRGSNNDRGCYDQHDRRGSSNDDRRGYRGYNQGGGGYQQQYSQDARYGSNQRNDNYGNNRGSHGGANMYSQNGGNRGGGGGRVGGGRTAAGMSNPGDLVGGADQPIHSVSKKSLRHNAQEFAVRPKTMVQDKGLGQKTTLLTNHTLVQLPQEPITLHVFNIEVFINGKSSNKRELCGPRFWEILKENKPTFGMPNQYIFNDVNMMWSTNKLRQSEGRTNNRRMNFVWKYVKQIKFGGNIEDEETMQLLSTLIDAIATQRARLPLAPPKYTVFKRLTYLICEEAYEPELPDVSLCHKLRIGTDARVGVSIAIRTNLRAGITACFDLGHTLFTRPAYPLVRLLCDIIEHSVVLDEAFEMKYDAALRACNVSDENLRVMTQILTKMTLQLSTETGDYVGEDGEVIVRPAPTIRNPGRNFKFVGLGAPADRYYFTSDGVELTVADYYLQKYNIRLRYPNLPCVLKKAPEQCGNKHSAMPLELVSYIVVPTRYGGFTMPDMRADMINKTTYTAQQRGKLLQHIIAQKSLSGIEPPVSNNDDYMKKHKLVMKREPIRVKATILPPPTLVYGDSVFHDEHHIGEWEAVTHDPPRQVLDGAVFRRKLYKSSEQPLMKRLMGSILLIQSPRQCRDFDYNQQGYHAIMRAIEDSGQPVLWADENKHSAVIQGELQFNQNQHGIEVIEQFLQNIKSTIGEYERDGEVIVPIVFAVFQARATVYSGNNNEYNDYNVLKYLADNKYGIHTQGILEKSLGVVGPSPKNCALTRLMVEKVLGKVGTTHRKLERGGAHKTWTIFTDPAKPTLVLGIDVSHPSTRDRETGNVLQKMSAATVVGNIDLDVTEFRASSRIQDTGVECLIDFSKEIDERIGEFIDHTGKRPAHIVVYRDGLSEGDFQKYLFEERVCIEERCLKIDTSFQPSITYIVVTKRHHTQFFLEDPSQGYESQGYNVLPGTLIEDAVTTNKYYDFFLSTQIGNEGCFRPTHYYVLHDTWTGKPDSFWPTVTHALTYNFCRSTTTVALPAPVLYAHLAAKRAKETLDGINTYKSVNNIYCDLESFGDLCEVNKDMNVNEKLEGMTFV.

Over residues 1–14 the composition is skewed to gly residues; that stretch reads MSYNNGGGGGGGGY. The segment at 1-134 is disordered; sequence MSYNNGGGGG…GNRGGGGGRV (134 aa). 2 stretches are compositionally biased toward basic and acidic residues: residues 15–29 and 40–77; these read RNDRDDRYHNNDRQN and YNDDRRDNRYDDRRGSNNDRGCYDQHDRRGSSNDDRRG. Residues 99 to 112 show a composition bias toward polar residues; sequence GSNQRNDNYGNNRG. The span at 125–134 shows a compositional bias: gly residues; the sequence is GNRGGGGGRV. One can recognise a PAZ domain in the interval 426 to 534; that stretch reads VMTQILTKMT…MPLELVSYIV (109 aa). Residues 774–1081 enclose the Piwi domain; sequence NVLKYLADNK…AAKRAKETLD (308 aa).

This sequence belongs to the argonaute family. Piwi subfamily. Interacts with rde-12. Interacts with rde-10. Highly expressed in the germline in hermaphrodites.

The protein localises to the cytoplasm. Functionally, argonaute protein required for gene silencing in the endogenous RNA interference (RNAi) pathway. Involved in the 26G RNAi pathway and associates with both unmethylated and methylated 26G small interfering RNAs (26G-siRNAs), which are a class of 26 nucleotide siRNAs that possess a guanine residue at the 5'-end. Associated 26G-siRNAs are methylated by the methyltransferase henn-1, which stabilizes the siRNAs. Association with 26G-siRNAs is required for the biogenesis of secondary 22G-siRNAs (a class of 22 nucleotide siRNAs that possess a triphosphorylated guanine residue at the 5'-end). May be involved in passenger strand cleavage of target 26G-siRNAs. This is Piwi-like protein ergo-1 from Caenorhabditis elegans.